Reading from the N-terminus, the 352-residue chain is Photosystem II D2 protein (352 aa).

Residues 40 to 60 (CAYLALGGWLTGTSFVTSWYT) traverse the membrane as a helical segment. His-117 is a chlorophyll a binding site. A helical transmembrane segment spans residues 124–140 (GFMLRQFEIARLVGVRP). Positions 129 and 142 each coordinate pheophytin a. A helical transmembrane segment spans residues 152–165 (VFVSVFLMYPLGQS). His-197 provides a ligand contact to chlorophyll a. Residues 207–227 (GALLCAIHGATVENTLFEDSE) traverse the membrane as a helical segment. Residues His-214 and Phe-261 each coordinate a plastoquinone. Residue His-214 coordinates Fe cation. His-268 is a Fe cation binding site. A helical membrane pass occupies residues 278-294 (GLWMSSIGIVGLALNLR).

It belongs to the reaction center PufL/M/PsbA/D family. In terms of assembly, PSII is composed of 1 copy each of membrane proteins PsbA, PsbB, PsbC, PsbD, PsbE, PsbF, PsbH, PsbI, PsbJ, PsbK, PsbL, PsbM, PsbT, PsbX, PsbY, PsbZ, Psb30/Ycf12, peripheral proteins PsbO, CyanoQ (PsbQ), PsbU, PsbV and a large number of cofactors. It forms dimeric complexes. The D1/D2 heterodimer binds P680, chlorophylls that are the primary electron donor of PSII, and subsequent electron acceptors. It shares a non-heme iron and each subunit binds pheophytin, quinone, additional chlorophylls, carotenoids and lipids. There is also a Cl(-1) ion associated with D1 and D2, which is required for oxygen evolution. The PSII complex binds additional chlorophylls, carotenoids and specific lipids. is required as a cofactor.

The protein resides in the cellular thylakoid membrane. The enzyme catalyses 2 a plastoquinone + 4 hnu + 2 H2O = 2 a plastoquinol + O2. Functionally, photosystem II (PSII) is a light-driven water:plastoquinone oxidoreductase that uses light energy to abstract electrons from H(2)O, generating O(2) and a proton gradient subsequently used for ATP formation. It consists of a core antenna complex that captures photons, and an electron transfer chain that converts photonic excitation into a charge separation. The D1/D2 (PsbA/PsbD) reaction center heterodimer binds P680, the primary electron donor of PSII as well as several subsequent electron acceptors. D2 is needed for assembly of a stable PSII complex. The sequence is that of Photosystem II D2 protein from Synechococcus elongatus (strain ATCC 33912 / PCC 7942 / FACHB-805) (Anacystis nidulans R2).